The chain runs to 285 residues: Elongation factor Ts (285 aa).

The segment at 82–85 (TDFV) is involved in Mg(2+) ion dislocation from EF-Tu.

This sequence belongs to the EF-Ts family.

It localises to the cytoplasm. Functionally, associates with the EF-Tu.GDP complex and induces the exchange of GDP to GTP. It remains bound to the aminoacyl-tRNA.EF-Tu.GTP complex up to the GTP hydrolysis stage on the ribosome. This Yersinia pseudotuberculosis serotype O:1b (strain IP 31758) protein is Elongation factor Ts.